The chain runs to 274 residues: Ribonucleoside-diphosphate reductase small chain (274 aa).

Fe cation contacts are provided by Asp-70, Glu-101, and His-104. The active site involves Tyr-108. Positions 163, 197, and 200 each coordinate Fe cation.

The protein belongs to the ribonucleoside diphosphate reductase small chain family. Heterodimer of a large and a small chain. It depends on Fe cation as a cofactor.

The enzyme catalyses a 2'-deoxyribonucleoside 5'-diphosphate + [thioredoxin]-disulfide + H2O = a ribonucleoside 5'-diphosphate + [thioredoxin]-dithiol. Its function is as follows. Ribonucleoside-diphosphate reductase holoenzyme provides the precursors necessary for viral DNA synthesis. Allows virus growth in non-dividing cells. Catalyzes the biosynthesis of deoxyribonucleotides from the corresponding ribonucleotides. The protein is Ribonucleoside-diphosphate reductase small chain of Sus scrofa (Pig).